The chain runs to 1902 residues: Rho GTPase-activating protein 21-B (1902 aa).

Disordered stretches follow at residues 1–44, 78–97, 284–317, 348–369, 409–450, 581–603, 613–632, and 879–902; these read MATR…EGFC, TSVKDEENGNRGVNAGRPRN, RTNRAGPLHRTGLADPSILKRTTSPSSSTPNVPM, PAAHAEESPSPTNHYASPGSHQ, NTTD…SQER, TRNFQNSSRAPHPRPALSDRSGF, IPTPYAAKPHSPSVRSDDGI, and KARENVQSSEDSESRKDSSSDVFS. Polar residues predominate over residues 10–22; the sequence is EQQQEPSSPASEI. The 86-residue stretch at 77-162 folds into the PDZ domain; sequence HTSVKDEENG…TLELSVMPKD (86 aa). Residues 305–317 are compositionally biased toward low complexity; the sequence is TTSPSSSTPNVPM. A compositionally biased stretch (polar residues) spans 409-424; that stretch reads NTTDYNQMLPNRSSGQ. Residues 903–1016 form the PH domain; sequence DSNKEGFLYF…WIKAIQENGN (114 aa). Polar residues predominate over residues 1039-1063; sequence TMMSSSSNKTEPSPKAQRQTLSIRQ. Positions 1039–1095 are disordered; it reads TMMSSSSNKTEPSPKAQRQTLSIRQQFRAGKPDDDISPPKDKGSWRRIMKKPFEKKP. Positions 1068 to 1082 are enriched in basic and acidic residues; sequence GKPDDDISPPKDKGS. Positions 1103–1295 constitute a Rho-GAP domain; it reads VRLDDCPPAH…TLIQKHDWFF (193 aa). Disordered stretches follow at residues 1306–1357, 1375–1394, 1494–1520, 1559–1704, 1729–1748, and 1803–1890; these read TVHE…GSGK, RKRKKQKDKPQPSSSEDELD, MSDSGTMLSTSSQASVQGSKPKVVSPE, VQSV…EPAW, QKANAAETRKKKNIRRRHTL, and TSTS…KLSG. Residues 1339–1357 show a composition bias toward low complexity; that stretch reads SDSATSDSAKSKGSWGSGK. The span at 1494-1511 shows a compositional bias: polar residues; the sequence is MSDSGTMLSTSSQASVQG. Composition is skewed to basic and acidic residues over residues 1575–1585 and 1601–1613; these read SELVSEGRPME and FDRRHQSKAEEPS. The segment covering 1614 to 1630 has biased composition (polar residues); sequence RNVQVNSEGSPSCTEGS. Basic and acidic residues-rich tracts occupy residues 1634 to 1652 and 1661 to 1673; these read KMDRRRFSSHKLIECDTLS and TDSDCSAESKTEE. A compositionally biased stretch (basic residues) spans 1737–1748; sequence RKKKNIRRRHTL. Polar residues predominate over residues 1865–1878; it reads NGDSFQSKNKNNFS.

The protein resides in the golgi apparatus membrane. The protein localises to the cell junction. Its subcellular location is the cytoplasmic vesicle membrane. It is found in the cytoplasm. It localises to the cytoskeleton. Functionally, GTPase-activating protein (GAP) for rhoa and cdc42. The chain is Rho GTPase-activating protein 21-B (arhgap21-b) from Xenopus laevis (African clawed frog).